The following is a 403-amino-acid chain: MVLTARQRDELNQAIHQYLLISYQQSAQLFKTEAAVKDGQIEADLLEKKWNSIVRLSKRVITLEQQVEQLNEQLAQAQAGKIQFNKSDDEQRLTPIEKFKLEGHRAGVNCVAFHPQYQILGSASDDGSIKLWDYESGHFEKTLKGHTSNVNCLAFDPTGKYICSASSDLSIKIWELKNHTCVKTLIGHEHSVSTVQFSDHGDFILSASRDKNIKLWEVATGFCKKTFSEHQEWVRCAVFSNDEKQIASCSQDQMIYIWVIDSGQVLHQLSGHEHVVEQVKYIPEHGAKQILTQQQQQNIQTINLLVSVSRDKEIKIWNTILGTNLFTLSGHDNWVNGVSFHPDGVHMLSVSDDKTIRVWNLKEQKQKKKIENAHDKFILKCEINKFIFATCSVDQTIKLWLLS.

Residues 7–38 (QRDELNQAIHQYLLISYQQSAQLFKTEAAVKD) form the LisH domain. Residues 51–87 (NSIVRLSKRVITLEQQVEQLNEQLAQAQAGKIQFNKS) are a coiled coil. WD repeat units follow at residues 103-142 (GHRA…FEKT), 145-184 (GHTS…CVKT), 187-226 (GHEH…CKKT), 229-270 (EHQE…HQLS), 271-327 (GHEH…NLFT), 330-369 (GHDN…QKKK), and 373-403 (AHDK…WLLS).

Belongs to the WD repeat LIS1/nudF family.

The protein resides in the cytoplasm. It localises to the cytoskeleton. It is found in the microtubule organizing center. Its subcellular location is the centrosome. In terms of biological role, positively regulates the activity of the minus-end directed microtubule motor protein dynein. May enhance dynein-mediated microtubule sliding by targeting dynein to the microtubule plus end. Required for several dynein- and microtubule-dependent processes. The chain is Lissencephaly-1 homolog 1 from Paramecium tetraurelia.